Consider the following 68-residue polypeptide: Large ribosomal subunit protein bL35 (68 aa).

The protein belongs to the bacterial ribosomal protein bL35 family.

The polypeptide is Large ribosomal subunit protein bL35 (Persephonella marina (strain DSM 14350 / EX-H1)).